A 476-amino-acid chain; its full sequence is Lipase (476 aa).

A signal peptide spans 1–23; sequence MGIFDYKNLGTEGSKTLFADAMA. Ser207 serves as the catalytic Charge relay system. Hemolysin-type calcium-binding repeat units follow at residues 372-389, 390-407, and 410-427; these read IGSDGNDLIQGGNGADFI, EGGKGNDTIRDNSGHNTF, and SGHFGNDRVIGYQPTDKL. Ca(2+) contacts are provided by Asp437, Asp440, and Asp448.

Belongs to the AB hydrolase superfamily. Lipase family.

The enzyme catalyses a triacylglycerol + H2O = a diacylglycerol + a fatty acid + H(+). In Pseudomonas fluorescens, this protein is Lipase.